Reading from the N-terminus, the 151-residue chain is Proline-rich acidic protein 1 (151 aa).

The signal sequence occupies residues 1 to 20 (MRRLLLVTSLVVVLLWEAGA). The interval 71–151 (LTTEEKPRGQ…EDQDHIYHPQ (81 aa)) is disordered.

As to quaternary structure, interacts with isoform 1 and isoform 3 of MAD1L1. Interacts with MTTP. As to expression, highly expressed in the intestinal epithelial cells (at protein level). Abundantly expressed in the epithelial cells of the liver, kidney and cervix. Significantly down-regulated in hepatocellular carcinoma and right colon adenocarcinoma compared with the respective adjacent normal tissues. Expressed in epididymis (at protein level).

Its subcellular location is the secreted. The protein localises to the endoplasmic reticulum. Lipid-binding protein which promotes lipid absorption by facilitating MTTP-mediated lipid transfer (mainly triglycerides and phospholipids) and MTTP-mediated apoB lipoprotein assembly and secretion. Protects the gastrointestinal epithelium from irradiation-induced apoptosis. May play an important role in maintaining normal growth homeostasis in epithelial cells. Involved in p53/TP53-dependent cell survival after DNA damage. May down-regulate the expression of MAD1L1 and exert a suppressive role in mitotic spindle assembly checkpoint in hepatocellular carcinomas. This chain is Proline-rich acidic protein 1 (PRAP1), found in Homo sapiens (Human).